We begin with the raw amino-acid sequence, 485 residues long: NADH-quinone oxidoreductase subunit N (485 aa).

A run of 14 helical transmembrane segments spans residues 8–28 (LIAL…MLSI), 35–55 (FINT…LYFV), 75–95 (LYIG…YSWL), 104–124 (EFYL…CANH), 125–145 (LASL…LIGY), 159–179 (YMLL…LLYA), 203–223 (ILSG…LVPF), 235–255 (PAPV…AVVI), 271–291 (TVLT…ALTQ), 297–317 (LLGY…VAVQ), 326–346 (VGIY…VVSL), 383–403 (LAGI…VLGV), 406–426 (ELWW…YYYL), and 455–475 (MVVL…QPLI).

It belongs to the complex I subunit 2 family. In terms of assembly, NDH-1 is composed of 13 different subunits. Subunits NuoA, H, J, K, L, M, N constitute the membrane sector of the complex.

It is found in the cell inner membrane. It carries out the reaction a quinone + NADH + 5 H(+)(in) = a quinol + NAD(+) + 4 H(+)(out). Functionally, NDH-1 shuttles electrons from NADH, via FMN and iron-sulfur (Fe-S) centers, to quinones in the respiratory chain. The immediate electron acceptor for the enzyme in this species is believed to be ubiquinone. Couples the redox reaction to proton translocation (for every two electrons transferred, four hydrogen ions are translocated across the cytoplasmic membrane), and thus conserves the redox energy in a proton gradient. The chain is NADH-quinone oxidoreductase subunit N from Photorhabdus laumondii subsp. laumondii (strain DSM 15139 / CIP 105565 / TT01) (Photorhabdus luminescens subsp. laumondii).